We begin with the raw amino-acid sequence, 488 residues long: E3 ubiquitin-protein ligase RNF8 (488 aa).

In terms of domain architecture, FHA spans 38–92 (VTIGRGLSVTYQLISKVCPLMISRSHCVLKQNPEGQWTIMDNKSLNGVWLNRERL). Positions 68–72 (QNPEG) are required for interaction with PIWIL1. Residues 141-164 (DQRMEKHKGSRTKRKFSSPGLENL) are disordered. The segment covering 145-156 (EKHKGSRTKRKF) has biased composition (basic residues). Serine 157 carries the phosphoserine modification. An RING-type zinc finger spans residues 406-444 (CIICSEYFIEAVTLNCAHSFCSFCINEWMKRKVECPICR).

It belongs to the RNF8 family. In terms of assembly, homodimer. Forms a E2-E3 ubiquitin ligase complex composed of the RNF8 homodimer and a E2 heterodimer of UBE2N and UBE2V2. Interacts with class III E2s, including UBE2E1, UBE2E2, and UBE2E3 and with UBE2N. Interacts with RXRA. Interacts (via FHA domain) with ATM-phosphorylated MDC1. Interacts (via FHA domain) with 'Thr-4829' phosphorylated HERC2 (via C-terminus). Interacts with PIWIL1; leading to sequester RNF8 in the cytoplasm. Interacts with WRAP53/TCAB1. As to quaternary structure, (Microbial infection) May interact with the L.monocytogenes protein actA; however, given these errors in the sequence (AJ242721), the relevance of the interaction with actA remains to be confirmed. In terms of processing, autoubiquitinated through 'Lys-48' and 'Lys-63' of ubiquitin. 'Lys-63' polyubiquitination is mediated by UBE2N. 'Lys-29'-type polyubiquitination is also observed, but it doesn't require its own functional RING-type zinc finger.

It is found in the nucleus. Its subcellular location is the cytoplasm. The protein resides in the midbody. It localises to the chromosome. The protein localises to the telomere. It catalyses the reaction S-ubiquitinyl-[E2 ubiquitin-conjugating enzyme]-L-cysteine + [acceptor protein]-L-lysine = [E2 ubiquitin-conjugating enzyme]-L-cysteine + N(6)-ubiquitinyl-[acceptor protein]-L-lysine.. It participates in protein modification; protein ubiquitination. In terms of biological role, E3 ubiquitin-protein ligase that plays a key role in DNA damage signaling via 2 distinct roles: by mediating the 'Lys-63'-linked ubiquitination of histones H2A and H2AX and promoting the recruitment of DNA repair proteins at double-strand breaks (DSBs) sites, and by catalyzing 'Lys-48'-linked ubiquitination to remove target proteins from DNA damage sites. Following DNA DSBs, it is recruited to the sites of damage by ATM-phosphorylated MDC1 and catalyzes the 'Lys-63'-linked ubiquitination of histones H2A and H2AX, thereby promoting the formation of TP53BP1 and BRCA1 ionizing radiation-induced foci (IRIF). Also controls the recruitment of UIMC1-BRCC3 (RAP80-BRCC36) and PAXIP1/PTIP to DNA damage sites. Promotes the recruitment of NBN to DNA damage sites by catalyzing 'Lys-6'-linked ubiquitination of NBN. Also recruited at DNA interstrand cross-links (ICLs) sites and catalyzes 'Lys-63'-linked ubiquitination of histones H2A and H2AX, leading to recruitment of FAAP20 and Fanconi anemia (FA) complex, followed by interstrand cross-link repair. H2A ubiquitination also mediates the ATM-dependent transcriptional silencing at regions flanking DSBs in cis, a mechanism to avoid collision between transcription and repair intermediates. Promotes the formation of 'Lys-63'-linked polyubiquitin chains via interactions with the specific ubiquitin-conjugating UBE2N/UBC13 and ubiquitinates non-histone substrates such as PCNA. Substrates that are polyubiquitinated at 'Lys-63' are usually not targeted for degradation. Also catalyzes the formation of 'Lys-48'-linked polyubiquitin chains via interaction with the ubiquitin-conjugating UBE2L6/UBCH8, leading to degradation of substrate proteins such as CHEK2, JMJD2A/KDM4A and KU80/XRCC5: it is still unclear how the preference toward 'Lys-48'- versus 'Lys-63'-linked ubiquitination is regulated but it could be due to RNF8 ability to interact with specific E2 specific ligases. For instance, interaction with phosphorylated HERC2 promotes the association between RNF8 and UBE2N/UBC13 and favors the specific formation of 'Lys-63'-linked ubiquitin chains. Promotes non-homologous end joining (NHEJ) by promoting the 'Lys-48'-linked ubiquitination and degradation the of KU80/XRCC5. Following DNA damage, mediates the ubiquitination and degradation of JMJD2A/KDM4A in collaboration with RNF168, leading to unmask H4K20me2 mark and promote the recruitment of TP53BP1 at DNA damage sites. Following DNA damage, mediates the ubiquitination and degradation of POLD4/p12, a subunit of DNA polymerase delta. In the absence of POLD4, DNA polymerase delta complex exhibits higher proofreading activity. In addition to its function in damage signaling, also plays a role in higher-order chromatin structure by mediating extensive chromatin decondensation. Involved in the activation of ATM by promoting histone H2B ubiquitination, which indirectly triggers histone H4 'Lys-16' acetylation (H4K16ac), establishing a chromatin environment that promotes efficient activation of ATM kinase. Required in the testis, where it plays a role in the replacement of histones during spermatogenesis. At uncapped telomeres, promotes the joining of deprotected chromosome ends by inducing H2A ubiquitination and TP53BP1 recruitment, suggesting that it may enhance cancer development by aggravating telomere-induced genome instability in case of telomeric crisis. Promotes the assembly of RAD51 at DNA DSBs in the absence of BRCA1 and TP53BP1 Also involved in class switch recombination in immune system, via its role in regulation of DSBs repair. May be required for proper exit from mitosis after spindle checkpoint activation and may regulate cytokinesis. May play a role in the regulation of RXRA-mediated transcriptional activity. Not involved in RXRA ubiquitination by UBE2E2. The polypeptide is E3 ubiquitin-protein ligase RNF8 (Mus musculus (Mouse)).